We begin with the raw amino-acid sequence, 574 residues long: Interactor of HORMAD1 protein 1 (574 aa).

A disordered region spans residues 113 to 133; the sequence is GLSKQFEEKKRRATDQSDSET. Residues 117–127 show a composition bias toward basic and acidic residues; the sequence is QFEEKKRRATD. Residues 217–240 adopt a coiled-coil conformation; it reads MEMKSTLKNLEVLVVEQTKNLQQF. Disordered regions lie at residues 267-324, 372-393, and 426-457; these read GHLK…GVWD, FSNL…GASQ, and TEQK…DRKQ. A compositionally biased stretch (low complexity) spans 272 to 284; it reads STSQTSPSLTQSL. Residues 372 to 381 are compositionally biased toward polar residues; that stretch reads FSNLPSQRAG. Positions 431–449 are enriched in basic residues; sequence RPCRKRRRGKKQQPQRSKR. A phosphoserine mark is found at Ser-476, Ser-569, and Ser-570.

Part of the MCD recombinosome complex, at least composed of IHO1, REC114 and MEI4. Interacts with REC114. Interacts with MEI4. Interacts with HORMAD1. Interacts with ANKRD31. As to expression, detected in spermatocytes and testis (at protein level).

The protein resides in the chromosome. In terms of biological role, required for DNA double-strand breaks (DSBs) formation in unsynapsed regions during meiotic recombination. Probably acts by forming a complex with MEI4 and REC114, which activates DSBs formation in unsynapsed regions, an essential step to ensure completion of synapsis. Not required for HORMAD1 functions in pairing-independent synaptonemal complex formation, ATR recruitment to unsynapsed axes, meiotic silencing of unsynapsed chromatin (MSUC) or meiotic surveillance. This is Interactor of HORMAD1 protein 1 from Mus musculus (Mouse).